A 1345-amino-acid polypeptide reads, in one-letter code: Rho guanine nucleotide exchange factor 10 (1345 aa).

Disordered stretches follow at residues 1-84 (MEQG…PAKL) and 99-120 (TPLQEDQPSSPDANTEEEGVGL). Over residues 22–39 (NNEEEGELFDFDSGDEVP) the composition is skewed to acidic residues. Basic and acidic residues predominate over residues 40 to 54 (EADRQVPSADDRTRG). Polar residues predominate over residues 102–111 (QEDQPSSPDA). Phosphoserine is present on Ser-157. 2 disordered regions span residues 158–195 (VEEEEAAETVGDGQCNSLSSEDLPHSSEQGSQEGSALA) and 207–273 (MENP…IPRS). The segment covering 171 to 191 (QCNSLSSEDLPHSSEQGSQEG) has biased composition (polar residues). Residues 224-239 (DSEPDEMIYDDVENGE) show a composition bias toward acidic residues. Residues 242–255 (GNSSPEYGWSSSEF) are compositionally biased toward low complexity. The stretch at 307–335 (GAMEIQQAKQRQERKMQKLMKAAKEGTKD) forms a coiled coil. At Ser-355 the chain carries Phosphoserine. In terms of domain architecture, DH spans 397-584 (VRRYILGSIV…ETLAEKLNER (188 aa)). 2 disordered regions span residues 1202-1237 (DRARDSPRSGSELQDEDPKDLLCSEEGPSCPGQPDT) and 1253-1306 (KNDL…RASS). Positions 1256-1271 (LSSSSGSLNLSHGSSS) are enriched in low complexity. Ser-1262 carries the phosphoserine modification. N5-methylglutamine is present on Gln-1314.

Methylated at Gln-1314 by N6AMT1. As to expression, ubiquitously expressed.

In terms of biological role, may play a role in developmental myelination of peripheral nerves. This Mus musculus (Mouse) protein is Rho guanine nucleotide exchange factor 10 (Arhgef10).